An 89-amino-acid chain; its full sequence is LYR motif-containing protein 4 (89 aa).

This sequence belongs to the complex I LYR family.

The protein localises to the mitochondrion. The protein resides in the nucleus. The protein operates within cofactor biosynthesis; iron-sulfur cluster biosynthesis. In terms of biological role, required for nuclear and mitochondrial iron-sulfur protein biosynthesis. This chain is LYR motif-containing protein 4 (lyrm4), found in Xenopus laevis (African clawed frog).